Consider the following 123-residue polypeptide: Fluoride-specific ion channel FluC 1 (123 aa).

The next 3 membrane-spanning stretches (helical) occupy residues 33–53, 59–79, and 98–118; these read TFLI…LFGV, YGTM…TTFS, and VFYL…GAML. Gly73 and Thr76 together coordinate Na(+).

Belongs to the fluoride channel Fluc/FEX (TC 1.A.43) family.

The protein localises to the cell inner membrane. It carries out the reaction fluoride(in) = fluoride(out). With respect to regulation, na(+) is not transported, but it plays an essential structural role and its presence is essential for fluoride channel function. In terms of biological role, fluoride-specific ion channel. Important for reducing fluoride concentration in the cell, thus reducing its toxicity. The polypeptide is Fluoride-specific ion channel FluC 1 (Brucella melitensis biotype 1 (strain ATCC 23456 / CCUG 17765 / NCTC 10094 / 16M)).